Consider the following 307-residue polypeptide: Urease accessory protein UreD (307 aa).

This sequence belongs to the UreD family. As to quaternary structure, ureD, UreF and UreG form a complex that acts as a GTP-hydrolysis-dependent molecular chaperone, activating the urease apoprotein by helping to assemble the nickel containing metallocenter of UreC. The UreE protein probably delivers the nickel.

It localises to the cytoplasm. Required for maturation of urease via the functional incorporation of the urease nickel metallocenter. The chain is Urease accessory protein UreD from Prochlorococcus marinus (strain NATL1A).